The chain runs to 324 residues: Fibronectin type III domain-containing protein 8 (324 aa).

Positions 179 to 280 constitute a Fibronectin type-III domain; the sequence is PDTPFIFEHT…KPYKFATLAT (102 aa).

This is Fibronectin type III domain-containing protein 8 (FNDC8) from Macaca fascicularis (Crab-eating macaque).